A 162-amino-acid polypeptide reads, in one-letter code: HTH-type transcriptional regulator IscR (162 aa).

Residues 2 to 131 (RLTSKGRYAV…NNITLGELVN (130 aa)) form the HTH rrf2-type domain. A DNA-binding region (H-T-H motif) is located at residues 28–51 (LADISERQGISLSYLEQLFSRLRK). Positions 92, 98, and 104 each coordinate [2Fe-2S] cluster. Residues 141–162 (RQHNEAHRPTRAQDAIDVKLRA) are disordered.

[2Fe-2S] cluster is required as a cofactor.

Its function is as follows. Regulates the transcription of several operons and genes involved in the biogenesis of Fe-S clusters and Fe-S-containing proteins. This chain is HTH-type transcriptional regulator IscR, found in Cronobacter sakazakii (strain ATCC BAA-894) (Enterobacter sakazakii).